Here is a 331-residue protein sequence, read N- to C-terminus: MKSITQASFMKGIMFTFTIAIISYILAKFPILHTIGALAIAIIFAMIYRQVIGYPEHIRPGITFASKRLLKFAIILYGLKLNMGDILGKGWKLLLIDIIVIIFSISLTLLLNQIIKGNKDISILLGIGTGVCGAAAIAATAPILKSKEKDIAISVGIIALVGTIFALIYTAIEAIFNIPTITYGAWTGISLHEIAQVVLAAGIGGSEAMTFALLGKLGRVFLLIPLSIVLILYMRYKSHSSQVQQKIDIPYFLIGFIIMACINTFVPIPSLLMNIINVITTLCMLMAMVALGLNIVLKEVISKALKPFIVICITSICLSGVTLLVTSIMFK.

A run of 10 helical transmembrane segments spans residues A7–L26, I31–Y48, L69–G88, L93–I115, S122–L144, S154–F176, Y183–G205, I249–L271, I275–L297, and F308–F330.

This sequence belongs to the UPF0324 family.

The protein resides in the cell membrane. This is UPF0324 membrane protein SERP0111 from Staphylococcus epidermidis (strain ATCC 35984 / DSM 28319 / BCRC 17069 / CCUG 31568 / BM 3577 / RP62A).